The sequence spans 506 residues: ATP synthase subunit alpha (506 aa).

The span at 119–129 (GPIEYEGKRPI) shows a compositional bias: basic and acidic residues. Residues 119–138 (GPIEYEGKRPIESPAPPIVR) are disordered. 169 to 176 (GDRQTGKT) contacts ATP.

Belongs to the ATPase alpha/beta chains family. As to quaternary structure, F-type ATPases have 2 components, CF(1) - the catalytic core - and CF(0) - the membrane proton channel. CF(1) has five subunits: alpha(3), beta(3), gamma(1), delta(1), epsilon(1). CF(0) has three main subunits: a(1), b(2) and c(9-12). The alpha and beta chains form an alternating ring which encloses part of the gamma chain. CF(1) is attached to CF(0) by a central stalk formed by the gamma and epsilon chains, while a peripheral stalk is formed by the delta and b chains.

Its subcellular location is the cell membrane. The enzyme catalyses ATP + H2O + 4 H(+)(in) = ADP + phosphate + 5 H(+)(out). In terms of biological role, produces ATP from ADP in the presence of a proton gradient across the membrane. The alpha chain is a regulatory subunit. The protein is ATP synthase subunit alpha of Caldanaerobacter subterraneus subsp. tengcongensis (strain DSM 15242 / JCM 11007 / NBRC 100824 / MB4) (Thermoanaerobacter tengcongensis).